Here is a 321-residue protein sequence, read N- to C-terminus: Ubiquitin carboxyl-terminal hydrolase ubh-4 (321 aa).

Positions 6 to 220 constitute a UCH catalytic domain; it reads SWCLIESDPG…ITFNLMALVP (215 aa). The active-site Nucleophile is the cysteine 83. Histidine 158 (proton donor) is an active-site residue. The ULD domain occupies 273–301; that stretch reads NYTPFVIELMKILAKEGKLVGLVDNAYQA.

The protein belongs to the peptidase C12 family. In terms of assembly, interacts with proteasome 19S subunit rpn-13. In terms of tissue distribution, highly expressed in intestine and to a lesser extent in other tissues including muscles and neurons.

It catalyses the reaction Thiol-dependent hydrolysis of ester, thioester, amide, peptide and isopeptide bonds formed by the C-terminal Gly of ubiquitin (a 76-residue protein attached to proteins as an intracellular targeting signal).. In terms of biological role, ubiquitin-protein hydrolase involved both in the processing of ubiquitin precursors and of ubiquitinated proteins. This enzyme is a thiol protease that recognizes and hydrolyzes a peptide bond at the C-terminal glycine of ubiquitin. This Caenorhabditis elegans protein is Ubiquitin carboxyl-terminal hydrolase ubh-4.